A 296-amino-acid polypeptide reads, in one-letter code: Pseudouridine-5'-phosphate glycosidase (296 aa).

The active-site Proton donor is glutamate 21. The substrate site is built by lysine 81 and valine 101. Residue aspartate 130 participates in Mn(2+) binding. 132–134 (SQD) contacts substrate. The active-site Nucleophile is lysine 151.

It belongs to the pseudouridine-5'-phosphate glycosidase family. In terms of assembly, homotrimer. Mn(2+) serves as cofactor.

The catalysed reaction is D-ribose 5-phosphate + uracil = psi-UMP + H2O. Catalyzes the reversible cleavage of pseudouridine 5'-phosphate (PsiMP) to ribose 5-phosphate and uracil. Functions biologically in the cleavage direction, as part of a pseudouridine degradation pathway. This Fervidobacterium nodosum (strain ATCC 35602 / DSM 5306 / Rt17-B1) protein is Pseudouridine-5'-phosphate glycosidase.